Here is a 429-residue protein sequence, read N- to C-terminus: Protein phosphatase 2C homolog 2 (429 aa).

In terms of domain architecture, PPM-type phosphatase spans 16–291; the sequence is LYGLSAMQGW…DNMTMIIIGL (276 aa). Residues aspartate 64, glycine 65, aspartate 233, and aspartate 282 each coordinate Mn(2+). Disordered regions lie at residues 320-348 and 384-429; these read YGKS…NDRS and RDVT…SASS. A compositionally biased stretch (basic and acidic residues) spans 384-397; it reads RDVTNHLQHDKAEE. Low complexity predominate over residues 405–419; the sequence is SESPSSANKNSSGSG.

The protein belongs to the PP2C family. It depends on Mg(2+) as a cofactor. Mn(2+) serves as cofactor.

It localises to the cytoplasm. The protein localises to the nucleus. It carries out the reaction O-phospho-L-seryl-[protein] + H2O = L-seryl-[protein] + phosphate. The enzyme catalyses O-phospho-L-threonyl-[protein] + H2O = L-threonyl-[protein] + phosphate. Functionally, dephosphorylating regulator for many key proteins. Dephosphorylates sakA, to negatively regulate the stress-activated p38MAPK cascade. The sequence is that of Protein phosphatase 2C homolog 2 from Aspergillus fumigatus (strain ATCC MYA-4609 / CBS 101355 / FGSC A1100 / Af293) (Neosartorya fumigata).